A 568-amino-acid polypeptide reads, in one-letter code: 2-succinyl-5-enolpyruvyl-6-hydroxy-3-cyclohexene-1-carboxylate synthase (568 aa).

This sequence belongs to the TPP enzyme family. MenD subfamily. As to quaternary structure, homodimer. Mg(2+) serves as cofactor. It depends on Mn(2+) as a cofactor. The cofactor is thiamine diphosphate.

It catalyses the reaction isochorismate + 2-oxoglutarate + H(+) = 5-enolpyruvoyl-6-hydroxy-2-succinyl-cyclohex-3-ene-1-carboxylate + CO2. It functions in the pathway quinol/quinone metabolism; 1,4-dihydroxy-2-naphthoate biosynthesis; 1,4-dihydroxy-2-naphthoate from chorismate: step 2/7. It participates in quinol/quinone metabolism; menaquinone biosynthesis. Catalyzes the thiamine diphosphate-dependent decarboxylation of 2-oxoglutarate and the subsequent addition of the resulting succinic semialdehyde-thiamine pyrophosphate anion to isochorismate to yield 2-succinyl-5-enolpyruvyl-6-hydroxy-3-cyclohexene-1-carboxylate (SEPHCHC). The sequence is that of 2-succinyl-5-enolpyruvyl-6-hydroxy-3-cyclohexene-1-carboxylate synthase from Actinobacillus succinogenes (strain ATCC 55618 / DSM 22257 / CCUG 43843 / 130Z).